Consider the following 205-residue polypeptide: Adenylyl-sulfate kinase (205 aa).

31–38 contributes to the ATP binding site; sequence GLSGAGKS. Catalysis depends on Ser-105, which acts as the Phosphoserine intermediate.

Belongs to the APS kinase family.

The catalysed reaction is adenosine 5'-phosphosulfate + ATP = 3'-phosphoadenylyl sulfate + ADP + H(+). It functions in the pathway sulfur metabolism; hydrogen sulfide biosynthesis; sulfite from sulfate: step 2/3. Its function is as follows. Catalyzes the synthesis of activated sulfate. In Shewanella baltica (strain OS223), this protein is Adenylyl-sulfate kinase.